The primary structure comprises 87 residues: Small ribosomal subunit protein bS20 (87 aa).

Positions 1-10 (MANIKSKQKR) are enriched in basic residues. The segment at 1–27 (MANIKSKQKRILTNEKSRQRNKSVRSA) is disordered.

It belongs to the bacterial ribosomal protein bS20 family.

Functionally, binds directly to 16S ribosomal RNA. This is Small ribosomal subunit protein bS20 from Corynebacterium aurimucosum (strain ATCC 700975 / DSM 44827 / CIP 107346 / CN-1) (Corynebacterium nigricans).